A 335-amino-acid polypeptide reads, in one-letter code: uncharacterized protein (335 aa).

Disordered stretches follow at residues 153–174, 218–239, and 254–295; these read LNDK…SDRI, HTSV…QEEV, and RCKV…PVTS. Residues 156–170 are compositionally biased toward acidic residues; sequence KEDEEKLDQTTESEE. 2 stretches are compositionally biased toward low complexity: residues 222–234 and 275–295; these read RRSM…SASS and THTS…PVTS.

This is an uncharacterized protein from Caenorhabditis elegans.